The chain runs to 180 residues: MQNPQNLIWIDLEMTGLDPENDVIIEMATIVTDSDLNTLAEGPVIAIHHSDEVLARMDEWNTRTHGNSGLTQRVRESRVSMAEAEAETIAFLEQWVPKGKSPICGNSICQDRRFLYTHMKALESYFHYRNLDVSTLKELAARWAPDVRDSFKKGSTHLALDDIRESIAELQHYRKHFIKF.

Residues 7 to 170 enclose the Exonuclease domain; it reads LIWIDLEMTG…DDIRESIAEL (164 aa). Residue Y128 is part of the active site.

This sequence belongs to the oligoribonuclease family.

The protein localises to the cytoplasm. Its function is as follows. 3'-to-5' exoribonuclease specific for small oligoribonucleotides. In Pseudomonas fluorescens (strain Pf0-1), this protein is Oligoribonuclease.